A 100-amino-acid chain; its full sequence is Urease subunit gamma (100 aa).

This sequence belongs to the urease gamma subunit family. Heterotrimer of UreA (gamma), UreB (beta) and UreC (alpha) subunits. Three heterotrimers associate to form the active enzyme.

The protein resides in the cytoplasm. The enzyme catalyses urea + 2 H2O + H(+) = hydrogencarbonate + 2 NH4(+). The protein operates within nitrogen metabolism; urea degradation; CO(2) and NH(3) from urea (urease route): step 1/1. The protein is Urease subunit gamma of Cereibacter sphaeroides (strain ATCC 17029 / ATH 2.4.9) (Rhodobacter sphaeroides).